We begin with the raw amino-acid sequence, 96 residues long: Large ribosomal subunit protein bL27 (96 aa).

The propeptide occupies 1 to 9; the sequence is MLRLDLQFF. The interval 14 to 35 is disordered; sequence GVGSTKNGRDSQSKRLGAKRAD.

This sequence belongs to the bacterial ribosomal protein bL27 family. In terms of processing, the N-terminus is cleaved by ribosomal processing cysteine protease Prp.

This chain is Large ribosomal subunit protein bL27, found in Bacillus cytotoxicus (strain DSM 22905 / CIP 110041 / 391-98 / NVH 391-98).